We begin with the raw amino-acid sequence, 216 residues long: Ribosome maturation factor RimP (216 aa).

It belongs to the RimP family.

The protein localises to the cytoplasm. Functionally, required for maturation of 30S ribosomal subunits. This chain is Ribosome maturation factor RimP, found in Bartonella henselae (strain ATCC 49882 / DSM 28221 / CCUG 30454 / Houston 1) (Rochalimaea henselae).